Consider the following 492-residue polypeptide: Ketol-acid reductoisomerase (NADP(+)) (492 aa).

The 195-residue stretch at 14-208 (LDQLGKCRFM…GGHRAGVLQS (195 aa)) folds into the KARI N-terminal Rossmann domain. NADP(+) is bound by residues 45–48 (CGAQ), R68, R76, S78, and 108–110 (DKQ). Residue H132 is part of the active site. G158 is a binding site for NADP(+). 2 KARI C-terminal knotted domains span residues 209–344 (SFVA…NAPQ) and 345–485 (FDGK…MKDM). Residues D217, E221, E389, and E393 each contribute to the Mg(2+) site. S414 lines the substrate pocket.

This sequence belongs to the ketol-acid reductoisomerase family. Mg(2+) serves as cofactor.

It catalyses the reaction (2R)-2,3-dihydroxy-3-methylbutanoate + NADP(+) = (2S)-2-acetolactate + NADPH + H(+). It carries out the reaction (2R,3R)-2,3-dihydroxy-3-methylpentanoate + NADP(+) = (S)-2-ethyl-2-hydroxy-3-oxobutanoate + NADPH + H(+). Its pathway is amino-acid biosynthesis; L-isoleucine biosynthesis; L-isoleucine from 2-oxobutanoate: step 2/4. It participates in amino-acid biosynthesis; L-valine biosynthesis; L-valine from pyruvate: step 2/4. In terms of biological role, involved in the biosynthesis of branched-chain amino acids (BCAA). Catalyzes an alkyl-migration followed by a ketol-acid reduction of (S)-2-acetolactate (S2AL) to yield (R)-2,3-dihydroxy-isovalerate. In the isomerase reaction, S2AL is rearranged via a Mg-dependent methyl migration to produce 3-hydroxy-3-methyl-2-ketobutyrate (HMKB). In the reductase reaction, this 2-ketoacid undergoes a metal-dependent reduction by NADPH to yield (R)-2,3-dihydroxy-isovalerate. The polypeptide is Ketol-acid reductoisomerase (NADP(+)) (Pectobacterium carotovorum subsp. carotovorum (strain PC1)).